The following is a 147-amino-acid chain: Monothiol glutaredoxin-S5 (147 aa).

The 98-residue stretch at 49–146 (AAEVRRAVAE…PILKKAGALW (98 aa)) folds into the Glutaredoxin domain. C69 serves as a coordination point for [2Fe-2S] cluster. The Responsive for interaction with TGA factors motif lies at 144–147 (ALWL).

This sequence belongs to the glutaredoxin family. CC-type subfamily.

The protein localises to the cytoplasm. The protein resides in the nucleus. Its function is as follows. May only reduce GSH-thiol disulfides, but not protein disulfides. The protein is Monothiol glutaredoxin-S5 (GRXS5) of Oryza sativa subsp. japonica (Rice).